Reading from the N-terminus, the 168-residue chain is Coiled-coil domain-containing protein 200 (168 aa).

A coiled-coil region spans residues 16–50 (LDRRRWLMAQQQQELQQKEQELKNHQEEEQQSEEK). Residues 23 to 168 (MAQQQQELQQ…LKSTNYIQQW (146 aa)) form a disordered region. Residues 31–52 (QQKEQELKNHQEEEQQSEEKLQ) are compositionally biased toward basic and acidic residues. The span at 70–82 (SQEQPQPSQQQPS) shows a compositional bias: low complexity. Composition is skewed to pro residues over residues 83 to 94 (VQPPSQPPPQPS) and 104 to 117 (GPQP…PQPT). Composition is skewed to polar residues over residues 124-138 (RCTQ…QDSQ) and 145-168 (PCQS…IQQW).

This chain is Coiled-coil domain-containing protein 200, found in Homo sapiens (Human).